The sequence spans 373 residues: D-alanine--D-alanine ligase (373 aa).

The ATP-grasp domain maps to 156–363; it reads KKLLAADGLP…YPTLLATMIE (208 aa). 184–239 is an ATP binding site; that stretch reads CERLGLPVFVKPARGGSSIGVSRVSSWDQLPAAVARARRHDPKVIVEAAISGRELE. Mg(2+) contacts are provided by Asp-318, Glu-330, and Asn-332.

The protein belongs to the D-alanine--D-alanine ligase family. Mg(2+) serves as cofactor. It depends on Mn(2+) as a cofactor.

The protein localises to the cytoplasm. It carries out the reaction 2 D-alanine + ATP = D-alanyl-D-alanine + ADP + phosphate + H(+). Its pathway is cell wall biogenesis; peptidoglycan biosynthesis. Cell wall formation. In Mycobacterium bovis (strain BCG / Pasteur 1173P2), this protein is D-alanine--D-alanine ligase.